We begin with the raw amino-acid sequence, 591 residues long: MAMGAVLSSRTFASPLSSSGKQHPPQNNKCTCSSPPTRDKFSRLTTRTTIFQVSNYSRSTSMERFQLSARFHQPVVDSSTNYLTRWFYNANLKRRRIECFLTSDPINTGWLKPRRWDNFTSLDTACVQPDYKIPVRTRADCKAEQYEITGSPLSPSDVPAEAVLIGDTNEISPWWQQFPKRWTVVLLCFFSFLLCNMDRVNMSIAILPMSSEFGWSPATVGLIQSSFFWGYLLTQILGGIWADRFGGKVVLGFGVVWWSIATVLTPLAAKIGLPFLLVMRAFMGIGEGVAMPAMNNILSKWVPVSERSRSLALVYSGMYLGSVTGLAFSPLLISRFGWPSVFYAFGSLGSVWFALWQRKAHSSPSEDPELSKAEKRYILGGSTLKEPVTSIPWKLILSKPPVWALIVSHFCHNWGTFILLTWMPTYYNQVLKFNLTESGLLCVLPWLTMAIFANIGGWIADTLVGRGVSITNVRKIMQSIGFLGPALFLTLLSKVRTPAMAVLCMACSQGSDAFSQSGLYSNHQDIGPRYAGVLLGLSNTAGVLAGVFGTAATGYILQKGSWDSVFQVAVVLYIVGTVVWNVFSTGEKVLE.

Residues 1–38 (MAMGAVLSSRTFASPLSSSGKQHPPQNNKCTCSSPPTR) form a disordered region. The N-terminal 76 residues, 1–76 (MAMGAVLSSR…LSARFHQPVV (76 aa)), are a transit peptide targeting the chloroplast. Positions 8-36 (SSRTFASPLSSSGKQHPPQNNKCTCSSPP) are enriched in polar residues. 11 helical membrane passes run 184–204 (VVLLCFFSFLLCNMDRVNMSI), 220–240 (VGLIQSSFFWGYLLTQILGGI), 249–269 (VVLGFGVVWWSIATVLTPLAA), 271–291 (IGLPFLLVMRAFMGIGEGVAM), 313–333 (LVYSGMYLGSVTGLAFSPLLI), 336–356 (FGWPSVFYAFGSLGSVWFALW), 402–422 (VWALIVSHFCHNWGTFILLTW), 440–460 (LLCVLPWLTMAIFANIGGWIA), 475–495 (KIMQSIGFLGPALFLTLLSKV), 531–551 (AGVLLGLSNTAGVLAGVFGTA), and 565–585 (VFQVAVVLYIVGTVVWNVFST).

This sequence belongs to the major facilitator superfamily. Sodium/anion cotransporter (TC 2.A.1.14) family.

It is found in the plastid. Its subcellular location is the chloroplast membrane. Its function is as follows. Probable anion transporter. This is Probable anion transporter 4, chloroplastic (PHT4;4) from Oryza sativa subsp. japonica (Rice).